A 114-amino-acid polypeptide reads, in one-letter code: Fumarate reductase subunit D (114 aa).

The next 3 membrane-spanning stretches (helical) occupy residues 24 to 44, 49 to 69, and 94 to 114; these read ISAL…PLGI, GIIA…LTIF, and LIFY…VASI.

Belongs to the FrdD family. In terms of assembly, part of an enzyme complex containing four subunits: a flavoprotein (FrdA), an iron-sulfur protein (FrdB), and two hydrophobic anchor proteins (FrdC and FrdD).

It is found in the cell inner membrane. In terms of biological role, anchors the catalytic components of the fumarate reductase complex to the cell membrane, binds quinones. The polypeptide is Fumarate reductase subunit D (Actinobacillus succinogenes (strain ATCC 55618 / DSM 22257 / CCUG 43843 / 130Z)).